We begin with the raw amino-acid sequence, 262 residues long: MSIDLRASSLDPVQIPGWRWQPFLDEASAALKPFNPSPYPIAETFLQKEGSTGSKAKPVPVTTATWACSTDKLRQVRCACVEAGMAASVLNFVINPSCRFDLPFFGADLVTLPNGHLLALDLQPVDKADPDHTQPVWERLMPLFERWQAELPDGGPIPEEAQPYFSPAFLWTRIPLGEEGDELIERVIRPAFIDYLQLYLNLVAEAEPVSDDRAELLLSGQKRYTAYRAEKDPARGMLTRFYGSEWTESYIHGVLFDLEDAA.

The protein belongs to the HY2 family.

The catalysed reaction is (3Z)-phycoerythrobilin + oxidized 2[4Fe-4S]-[ferredoxin] = 15,16-dihydrobiliverdin + reduced 2[4Fe-4S]-[ferredoxin] + 2 H(+). Its function is as follows. Catalyzes the two-electron reduction of the C2 and C3(1) diene system of 15,16-dihydrobiliverdin. This is Phycoerythrobilin:ferredoxin oxidoreductase (pebB) from Parasynechococcus marenigrum (strain WH8102).